Reading from the N-terminus, the 366-residue chain is Alanine racemase (366 aa).

Lysine 40 serves as the catalytic Proton acceptor; specific for D-alanine. Lysine 40 carries the N6-(pyridoxal phosphate)lysine modification. Arginine 136 is a binding site for substrate. The Proton acceptor; specific for L-alanine role is filled by tyrosine 263. Methionine 310 is a binding site for substrate.

This sequence belongs to the alanine racemase family. It depends on pyridoxal 5'-phosphate as a cofactor.

It carries out the reaction L-alanine = D-alanine. It participates in amino-acid biosynthesis; D-alanine biosynthesis; D-alanine from L-alanine: step 1/1. Functionally, catalyzes the interconversion of L-alanine and D-alanine. May also act on other amino acids. The polypeptide is Alanine racemase (alr) (Streptococcus pyogenes serotype M5 (strain Manfredo)).